A 124-amino-acid polypeptide reads, in one-letter code: U12-barytoxin-Tl1a (124 aa).

The signal sequence occupies residues 1–20 (MKTMIAWLVLLTFAAALCFA). Residues 21–78 (DEGLKQEHMNERKKSRFREDIPDEISEDLLLQEMEAMEAELLEKEMRMEENRNSREKR) constitute a propeptide that is removed on maturation. Cystine bridges form between Cys-79–Cys-99, Cys-86–Cys-104, and Cys-98–Cys-118.

This sequence belongs to the neurotoxin 14 (magi-1) family. 04 (ICK-6) subfamily. As to expression, expressed by the venom gland.

The protein resides in the secreted. Functionally, ion channel inhibitor. The chain is U12-barytoxin-Tl1a from Trittame loki (Brush-footed trapdoor spider).